A 1004-amino-acid chain; its full sequence is Cadmium/zinc-transporting ATPase HMA3 (1004 aa).

The HMA domain occupies 42 to 108; it reads KKTYLDVLGV…ALNKAGLEAS (67 aa). 8 helical membrane passes run 120–140, 144–164, 171–191, 193–213, 340–360, 371–391, 683–703, and 707–727; these read RWPS…FFEW, PLQC…VRRG, LSLD…CLGD, TEAG…TLAC, CAKY…LIPA, WKLA…LSTP, IAVN…LAAA, and VLWA…LNSM. The tract at residues 931 to 952 is disordered; sequence TGCGASKRSPPAEGSCSGGEGG.

It belongs to the cation transport ATPase (P-type) (TC 3.A.3) family. Type IB subfamily. Specifically expressed in roots.

It localises to the vacuole membrane. It carries out the reaction Zn(2+)(in) + ATP + H2O = Zn(2+)(out) + ADP + phosphate + H(+). The enzyme catalyses Cd(2+)(in) + ATP + H2O = Cd(2+)(out) + ADP + phosphate + H(+). Functionally, root-specific cadmium (Cd) transporter that mediates Cd efflux in root vacuoles. Involved in Cd detoxification by sequestrating Cd into root vacuoles and limiting translocation of Cd from the roots to the shoots, and accumulation in grains. This is Cadmium/zinc-transporting ATPase HMA3 from Oryza sativa subsp. japonica (Rice).